The primary structure comprises 101 residues: Large ribosomal subunit protein eL43 (101 aa).

Positions 40, 43, 59, and 62 each coordinate Zn(2+). The segment at 40–62 (CPSCRSLVRLERIAFGIWRCPKC) adopts a C4-type zinc-finger fold.

Belongs to the eukaryotic ribosomal protein eL43 family. Putative zinc-binding subfamily. Part of the 50S ribosomal subunit. Requires Zn(2+) as cofactor.

Functionally, binds to the 23S rRNA. This chain is Large ribosomal subunit protein eL43, found in Pyrobaculum aerophilum (strain ATCC 51768 / DSM 7523 / JCM 9630 / CIP 104966 / NBRC 100827 / IM2).